Here is a 420-residue protein sequence, read N- to C-terminus: MSDSGTPAQARISLFVGKGGVGKSTLASATAVCDAGAGQRVLVVSTDQAHSLGDVLGIAVPPTGQGDPVRVLAYDPEAGGGFLDALALDTLALLEGRWLHVVETLDRRFPGSELSSIAPEELCALPGIQEVLGLHAVGELAAARRWDRIVVDCASTADALRMLTLPATFGLYVERAWPRHRRLSIGADDGRSAVLAELLERIRASVERLSTLLTDGALVSAHLVLTPERVVAAEAVRTLGSLALMGVRVEELLVNQLLVQDENYEYRSLPDHPAFHWYAERIGEQRAVLDDLDATIGDVALVLVPHLAGEPIGPKALGGLLDSARRRQGSAPPGPLQPIVDLESGSGLASIYRLRLALPQLDPGTLTLGRADDDLIVSAGGMRRRVRLASVLRRCTVLDAHLRGGELTVRFRPNPEVWPT.

It belongs to the arsA ATPase family.

This Mycobacterium tuberculosis (strain ATCC 25618 / H37Rv) protein is Protein Rv2184c.